The chain runs to 143 residues: ATP synthase epsilon chain (143 aa).

Belongs to the ATPase epsilon chain family. As to quaternary structure, F-type ATPases have 2 components, CF(1) - the catalytic core - and CF(0) - the membrane proton channel. CF(1) has five subunits: alpha(3), beta(3), gamma(1), delta(1), epsilon(1). CF(0) has three main subunits: a, b and c.

The protein resides in the cell membrane. In terms of biological role, produces ATP from ADP in the presence of a proton gradient across the membrane. This chain is ATP synthase epsilon chain, found in Lacticaseibacillus casei (strain BL23) (Lactobacillus casei).